The following is a 468-amino-acid chain: 5-carboxymethyl-2-hydroxymuconate semialdehyde dehydrogenase (468 aa).

Residue Glu244 is part of the active site. Cys278 serves as the catalytic Nucleophile.

The protein belongs to the aldehyde dehydrogenase family. Homodimer.

It carries out the reaction 2-hydroxy-5-carboxymethylmuconate semialdehyde + NAD(+) + H2O = (2E,4Z)-5-hydroxypenta-2,4-diene-1,2,5-tricarboxylate + NADH + 2 H(+). It functions in the pathway aromatic compound metabolism; 4-hydroxyphenylacetate degradation; pyruvate and succinate semialdehyde from 4-hydroxyphenylacetate: step 3/7. Functionally, catalyzes the conversion of 5-carboxymethyl-2-hydroxy-muconic semialdehyde (CHMS) into 5-carboxymethyl-2-hydroxy-muconic acid (CHM or (2E,4Z)-5-hydroxypenta-2,4-diene-1,2,5-tricarboxylate). Is involved in a meta-cleavage pathway for the catabolism of 4-hydroxyphenylacetate (4-HPA) via homoprotocatechuate (HPC or 3,4-dihydroxyphenylacetate). This chain is 5-carboxymethyl-2-hydroxymuconate semialdehyde dehydrogenase, found in Escherichia coli.